The primary structure comprises 338 residues: MSKKSENQPCMVCGEISYSIRFGAVSCRACAEFFRRKIVSKARIPKRCNGACDLGKYHRKTCQSCRFQKCLKIGMLEKVVASRTPVNRRSENNQTILSGLEKAYDKLENSRDNVFDRKNKIPKYCNHQELDDMFEIDIKLISTHFIQFFESKSSLENNQNKVLSTHFIIRFSLLEVAFRAFGKPTYILPNNDIIDVSKLDKVYQHLETGEDERGKNSQVILQRFWQMNEKTMKTEVFPVNLDQSEFLFLCALIYWDFGIENQSEKCLEECQRMRTQVLKELTEYEKSNYPENELRVAQVIGILQALQKTLDVIQHSGYISNVYNLKGKQCPLYEATNE.

Positions 7-82 (NQPCMVCGEI…IGMLEKVVAS (76 aa)) form a DNA-binding region, nuclear receptor. An NR C4-type zinc finger spans residues 10 to 30 (CMVCGEISYSIRFGAVSCRAC). The NR C4-type; degenerate zinc finger occupies 46–65 (KRCNGACDLGKYHRKTCQSC). Residues 92 to 338 (NNQTILSGLE…QCPLYEATNE (247 aa)) enclose the NR LBD domain.

The protein belongs to the nuclear hormone receptor family.

It localises to the nucleus. Its function is as follows. Orphan nuclear receptor. This Caenorhabditis elegans protein is Nuclear hormone receptor family member nhr-108 (nhr-108).